Reading from the N-terminus, the 439-residue chain is GTPase Der (439 aa).

EngA-type G domains lie at 2 to 167 (PTVL…ESKG) and 182 to 358 (IRVS…KSLH). Residues 8–15 (GKSNVGKS), 55–59 (DTGGI), 118–121 (NKSE), 188–195 (GRPNAGKS), 235–239 (DTAGL), and 301–304 (NKID) contribute to the GTP site. One can recognise a KH-like domain in the interval 359–439 (YRVQTSAVNS…PIFLKFKSRH (81 aa)).

The protein belongs to the TRAFAC class TrmE-Era-EngA-EngB-Septin-like GTPase superfamily. EngA (Der) GTPase family. Associates with the 50S ribosomal subunit.

In terms of biological role, GTPase that plays an essential role in the late steps of ribosome biogenesis. In Thermosipho africanus (strain TCF52B), this protein is GTPase Der.